Consider the following 187-residue polypeptide: UPF0200 protein MM_1313 (187 aa).

9–16 (GMPASGKS) contributes to the ATP binding site.

This sequence belongs to the UPF0200 family.

This Methanosarcina mazei (strain ATCC BAA-159 / DSM 3647 / Goe1 / Go1 / JCM 11833 / OCM 88) (Methanosarcina frisia) protein is UPF0200 protein MM_1313.